The chain runs to 432 residues: D-amino acid dehydrogenase (432 aa).

3 to 17 contacts FAD; it reads VVILGSGVVGVASAW.

Belongs to the DadA oxidoreductase family. The cofactor is FAD.

The enzyme catalyses a D-alpha-amino acid + A + H2O = a 2-oxocarboxylate + AH2 + NH4(+). It functions in the pathway amino-acid degradation; D-alanine degradation; NH(3) and pyruvate from D-alanine: step 1/1. Oxidative deamination of D-amino acids. This chain is D-amino acid dehydrogenase, found in Shigella boydii serotype 4 (strain Sb227).